A 273-amino-acid chain; its full sequence is 3-methyl-2-oxobutanoate hydroxymethyltransferase 1 (273 aa).

2 residues coordinate Mg(2+): Asp49 and Asp88. Residues 49-50 (DS), Asp88, and Lys118 contribute to the 3-methyl-2-oxobutanoate site. Glu120 provides a ligand contact to Mg(2+). Glu187 acts as the Proton acceptor in catalysis.

The protein belongs to the PanB family. As to quaternary structure, homodecamer; pentamer of dimers. Mg(2+) is required as a cofactor.

Its subcellular location is the cytoplasm. The enzyme catalyses 3-methyl-2-oxobutanoate + (6R)-5,10-methylene-5,6,7,8-tetrahydrofolate + H2O = 2-dehydropantoate + (6S)-5,6,7,8-tetrahydrofolate. Its pathway is cofactor biosynthesis; (R)-pantothenate biosynthesis; (R)-pantoate from 3-methyl-2-oxobutanoate: step 1/2. Catalyzes the reversible reaction in which hydroxymethyl group from 5,10-methylenetetrahydrofolate is transferred onto alpha-ketoisovalerate to form ketopantoate. The protein is 3-methyl-2-oxobutanoate hydroxymethyltransferase 1 of Pseudomonas aeruginosa (strain UCBPP-PA14).